We begin with the raw amino-acid sequence, 122 residues long: E3 ubiquitin-protein ligase PPP1R11 (122 aa).

Residues 1 to 12 (MAEVPGTSSETI) are compositionally biased toward polar residues. Residues 1 to 33 (MAEVPGTSSETITETVQTGTPPPPQQEGRSLTI) form a disordered region. Residue T20 is modified to Phosphothreonine. The atypical RING finger domain 1 stretch occupies residues 55 to 65 (HLGRRSSKCCC). The segment at 72-122 (QFGESSSESEGDDEEGCGSAHCILGHGRRGHGQREGGGTTVPPSSGGTNPH) is disordered. The span at 78-87 (SESEGDDEEG) shows a compositional bias: acidic residues. The interval 88–97 (CGSAHCILGH) is atypical RING finger domain 2. Low complexity predominate over residues 111–122 (TVPPSSGGTNPH).

The enzyme catalyses S-ubiquitinyl-[E2 ubiquitin-conjugating enzyme]-L-cysteine + [acceptor protein]-L-lysine = [E2 ubiquitin-conjugating enzyme]-L-cysteine + N(6)-ubiquitinyl-[acceptor protein]-L-lysine.. It participates in protein modification; protein ubiquitination. Its function is as follows. Atypical E3 ubiquitin-protein ligase which ubiquitinates TLR2 at 'Lys-754' leading to its degradation by the proteasome. Inhibitor of protein phosphatase 1. This Danio rerio (Zebrafish) protein is E3 ubiquitin-protein ligase PPP1R11 (ppp1r11).